The chain runs to 486 residues: uncharacterized protein (486 aa).

Positions methionine 1–glycine 25 are cleaved as a signal peptide. 2 stretches are compositionally biased toward basic and acidic residues: residues lysine 306–serine 316 and lysine 326–lysine 349. The segment at lysine 306–lysine 349 is disordered.

This is an uncharacterized protein from Methanocaldococcus jannaschii (strain ATCC 43067 / DSM 2661 / JAL-1 / JCM 10045 / NBRC 100440) (Methanococcus jannaschii).